We begin with the raw amino-acid sequence, 432 residues long: MEVMDHHHHTSSTRPNPTTRRMNFFLPNAIHMDSHLLYYRPQPGYGAPPPQGGYGYPQPPPPQQPYGYSQPPPQQYGGYNGVPPNAPQYGRPGMPSVNSNAYINGNQNAPPPPPQGMHSFGQGAPQNYAFQYSNCTGRRKALLIGINYFGQRGQLRGCINDVKNMSSYLHENFGYQRDDMVILTDDQQNPMSQPTKQNILRAMHWLVKDARPNDSLFFHYSGHGGQTKDLDGDEEDGYDEVIYPVDFRQVGHIVDDEMHRIMVQPLQPGVRLTAIFDSCHSGTALDLPYVYSTQGVLKEPNLAKEAGQGLLGVISSYSQGDMSGVASNLMGFFKKATTGDDAYNKTLATKTSPADVVMWSGSKDDQTSADATIAAQATGAMSWAFITAMKKNPQQSYVQLLNSIRDELATKYTQKPQLSCSHPLSMVPPLLL.

Over residues 1 to 11 the composition is skewed to basic residues; the sequence is MEVMDHHHHTS. 2 disordered regions span residues 1–21 and 41–87; these read MEVM…TTRR and PQPG…PNAP. Positions 12–21 are enriched in low complexity; the sequence is STRPNPTTRR. The segment covering 46-74 has biased composition (pro residues); that stretch reads GAPPPQGGYGYPQPPPPQQPYGYSQPPPQ. Active-site residues include His223 and Cys279.

The protein belongs to the peptidase C14B family.

In terms of biological role, involved in cell death (apoptosis). The chain is Metacaspase-1 (casA) from Sclerotinia sclerotiorum (strain ATCC 18683 / 1980 / Ss-1) (White mold).